A 404-amino-acid polypeptide reads, in one-letter code: Cytochrome b (404 aa).

Helical transmembrane passes span 35 to 55 (FGSLAGLCLVIQILTGVFLAM), 79 to 101 (WLLRYMHANGASMFFIVVYLHFF), 116 to 136 (VWCLGVVILLLMIVTAFIGYV), and 182 to 202 (FFSLHYLLPFIIAGASILHLA). Heme b contacts are provided by His85 and His99. Residues His186 and His200 each coordinate heme b. Position 205 (His205) interacts with a ubiquinone. 4 helical membrane-spanning segments follow: residues 228–248 (IYVKDLVGWVAFAIFFSIFVF), 292–312 (LGGVAAIGLVFVSLLALPFIN), 324–344 (IHQKFFWLLVADCLLLGWIGC), and 351–370 (YVTIGQIASVGFFFYFAITP).

This sequence belongs to the cytochrome b family. In terms of assembly, the main subunits of complex b-c1 are: cytochrome b, cytochrome c1 and the Rieske protein. Heme b serves as cofactor.

Its subcellular location is the mitochondrion inner membrane. Its function is as follows. Component of the ubiquinol-cytochrome c reductase complex (complex III or cytochrome b-c1 complex) that is part of the mitochondrial respiratory chain. The b-c1 complex mediates electron transfer from ubiquinol to cytochrome c. Contributes to the generation of a proton gradient across the mitochondrial membrane that is then used for ATP synthesis. The polypeptide is Cytochrome b (MT-CYB) (Marchantia polymorpha (Common liverwort)).